We begin with the raw amino-acid sequence, 216 residues long: Octanoyltransferase (216 aa).

The region spanning 33 to 216 is the BPL/LPL catalytic domain; sequence AATADELWIV…ANRLSTSLSR (184 aa). Residues 72–79, 148–150, and 162–164 each bind substrate; these read RGGEVTYH, ALG, and GVS. The Acyl-thioester intermediate role is filled by C180.

Belongs to the LipB family.

It is found in the cytoplasm. It carries out the reaction octanoyl-[ACP] + L-lysyl-[protein] = N(6)-octanoyl-L-lysyl-[protein] + holo-[ACP] + H(+). It participates in protein modification; protein lipoylation via endogenous pathway; protein N(6)-(lipoyl)lysine from octanoyl-[acyl-carrier-protein]: step 1/2. In terms of biological role, catalyzes the transfer of endogenously produced octanoic acid from octanoyl-acyl-carrier-protein onto the lipoyl domains of lipoate-dependent enzymes. Lipoyl-ACP can also act as a substrate although octanoyl-ACP is likely to be the physiological substrate. The polypeptide is Octanoyltransferase (Janthinobacterium sp. (strain Marseille) (Minibacterium massiliensis)).